The chain runs to 506 residues: EPTC-inducible aldehyde dehydrogenase (506 aa).

219 to 225 (GFGVEAG) contacts NAD(+). Residues Glu-263 and Cys-302 contribute to the active site.

It belongs to the aldehyde dehydrogenase family.

The catalysed reaction is an aldehyde + NAD(+) + H2O = a carboxylate + NADH + 2 H(+). Functionally, degrades all aldehydes potentially generated by N dealkylation of thiocarbamates and may also participate in ethanolamine metabolism and further assimilation of degradation products by thiocarbamate-induced cytochrome P-450. The sequence is that of EPTC-inducible aldehyde dehydrogenase (thcA) from Rhodococcus erythropolis (Arthrobacter picolinophilus).